The following is a 137-amino-acid chain: MANAASGMAVHDDCKLKFMELKAKRTFRTIVYKIEDKQVIVEKLGEPEQSYDDFAASLPADDCRYCIYDFDFVTAENCQKSKIFFIAWSPDTAKVRDKMIYASSKDRFKRELDGIQVELQATDPTEMGLDVFKSRTN.

One can recognise an ADF-H domain in the interval 5 to 137 (ASGMAVHDDC…GLDVFKSRTN (133 aa)). Phosphoserine is present on serine 6.

It belongs to the actin-binding proteins ADF family. Interacts with AIP1-1.

Its subcellular location is the cytoplasm. The protein resides in the cytoskeleton. Actin-depolymerizing protein. Severs actin filaments (F-actin) and binds to actin monomers. Required for normal cell growth, plant development, cell organ expansion and flowering. Essential for root-knot nematode infection. This chain is Actin-depolymerizing factor 2 (ADF2), found in Arabidopsis thaliana (Mouse-ear cress).